A 188-amino-acid polypeptide reads, in one-letter code: Elongation factor P (188 aa).

Residue Lys-34 is modified to N6-(3,6-diaminohexanoyl)-5-hydroxylysine.

The protein belongs to the elongation factor P family. May be beta-lysylated on the epsilon-amino group of Lys-34 by the combined action of EpmA and EpmB, and then hydroxylated on the C5 position of the same residue by EpmC (if this protein is present). Lysylation is critical for the stimulatory effect of EF-P on peptide-bond formation. The lysylation moiety may extend toward the peptidyltransferase center and stabilize the terminal 3-CCA end of the tRNA. Hydroxylation of the C5 position on Lys-34 may allow additional potential stabilizing hydrogen-bond interactions with the P-tRNA.

The protein localises to the cytoplasm. It participates in protein biosynthesis; polypeptide chain elongation. Functionally, involved in peptide bond synthesis. Alleviates ribosome stalling that occurs when 3 or more consecutive Pro residues or the sequence PPG is present in a protein, possibly by augmenting the peptidyl transferase activity of the ribosome. Modification of Lys-34 is required for alleviation. The polypeptide is Elongation factor P (Pectobacterium atrosepticum (strain SCRI 1043 / ATCC BAA-672) (Erwinia carotovora subsp. atroseptica)).